The sequence spans 406 residues: DNA primase large subunit PriL (406 aa).

[4Fe-4S] cluster contacts are provided by Cys-302, Cys-375, Cys-384, and Cys-389.

The protein belongs to the eukaryotic-type primase large subunit family. As to quaternary structure, heterodimer of a small subunit (PriS) and a large subunit (PriL). Requires [4Fe-4S] cluster as cofactor.

Regulatory subunit of DNA primase, an RNA polymerase that catalyzes the synthesis of short RNA molecules used as primers for DNA polymerase during DNA replication. Stabilizes and modulates the activity of the small subunit, increasing the rate of DNA synthesis, and conferring RNA synthesis capability. The DNA polymerase activity may enable DNA primase to also catalyze primer extension after primer synthesis. May also play a role in DNA repair. The sequence is that of DNA primase large subunit PriL from Methanopyrus kandleri (strain AV19 / DSM 6324 / JCM 9639 / NBRC 100938).